Here is a 568-residue protein sequence, read N- to C-terminus: Potassium-transporting ATPase potassium-binding subunit (568 aa).

Transmembrane regions (helical) follow at residues 6-26 (ILQI…IGGF), 64-84 (TGYA…TYLI), 135-155 (IALA…AIAF), 179-199 (LYIL…QGVI), 254-274 (LANL…TYTF), 285-305 (WALL…VYPA), 382-402 (GLYG…LMVG), 419-439 (MVML…AAGI), 459-481 (VLYG…SANT), 488-508 (LGIA…AAAG), and 529-549 (LFVT…FFPA).

Belongs to the KdpA family. The system is composed of three essential subunits: KdpA, KdpB and KdpC.

Its subcellular location is the cell inner membrane. Part of the high-affinity ATP-driven potassium transport (or Kdp) system, which catalyzes the hydrolysis of ATP coupled with the electrogenic transport of potassium into the cytoplasm. This subunit binds the periplasmic potassium ions and delivers the ions to the membrane domain of KdpB through an intramembrane tunnel. The chain is Potassium-transporting ATPase potassium-binding subunit from Solibacter usitatus (strain Ellin6076).